The chain runs to 377 residues: [2-(trimethylamino)ethyl]phosphonate dioxygenase (377 aa).

Residues aspartate 95–proline 119 form a disordered region. Asparagine 187 is a [2-(trimethylamino)ethyl]phosphonate binding site. A 2-oxoglutarate-binding site is contributed by histidine 198. Fe(2+) is bound by residues histidine 198 and aspartate 200. Aspartate 200, asparagine 201, tyrosine 203, asparagine 286, and arginine 288 together coordinate [2-(trimethylamino)ethyl]phosphonate. 2-oxoglutarate is bound by residues histidine 341, arginine 343, and arginine 352. Histidine 341 is a Fe(2+) binding site.

It belongs to the gamma-BBH/TMLD family. In terms of assembly, homodimer. It depends on Fe(2+) as a cofactor. The cofactor is L-ascorbate.

The enzyme catalyses [2-(trimethylamino)ethyl]phosphonate + 2-oxoglutarate + O2 = [(1R)-1-hydroxy-2-(trimethylamino)ethyl]phosphonate + succinate + CO2. Its function is as follows. Involved in the degradation of the naturally occurring organophosphonate 2-(trimethylammonio)ethylphosphonate (TMAEP). Catalyzes the hydroxylation of TMAEP to (R)-1-hydroxy-2-(trimethylammonio)ethylphosphonate (OH-TMAEP). Is highly specific for its N-trimethylated substrate. Cannot use gamma-butyrobetaine as substrate. This chain is [2-(trimethylamino)ethyl]phosphonate dioxygenase, found in Leisingera caerulea (Phaeobacter caeruleus).